We begin with the raw amino-acid sequence, 205 residues long: Methylamine utilization protein MauD (205 aa).

The chain crosses the membrane as a helical span at residues 5–25 (IMIASNVLLWGAFLALAALML). Positions 50-184 (PDIGERSPVF…VESLFETTRV (135 aa)) constitute a Thioredoxin domain.

The protein resides in the membrane. It functions in the pathway one-carbon metabolism; methylamine degradation. In terms of biological role, may be specifically involved in the processing, transport, and/or maturation of the MADH beta-subunit. The sequence is that of Methylamine utilization protein MauD (mauD) from Methylobacillus flagellatus (strain ATCC 51484 / DSM 6875 / VKM B-1610 / KT).